Here is a 414-residue protein sequence, read N- to C-terminus: MNRQSWLLNLSLLKTHPAFRAVFLARFISIVSLGLLGVAVPVQIQMMTHSTWQVGLSVTLTGGAMFIGLMVGGVLADRYERKKVILLARGTCGIGFIGLCVNALLPEPSLLAIYLLGLWDGFFASLGVTALLAATPALVGRENLMQAGAITMLTVRLGSVISPMLGGILLASGGVAWNYGLAAAGTFITLLPLLTLPRLPVPPQPRENPFLALLAAFRFLLACPLIGGIALLGGLVTMASAVRVLYPALAMSWQMSAAQIGLLYAAIPLGAAIGALTSGQLAHSVRPGLIMLVSTVGSFLAVGLFAIMPVWIAGVICLALFGWLSAISSLLQYTLLQTQTPENMLGRMNGLWTAQNVTGDAIGAALLGGLGAMMTPVASASVSGFGLVIIGLLLLLVLGELRRFRQTSPVSDAG.

Residues 1-21 (MNRQSWLLNLSLLKTHPAFRA) are Cytoplasmic-facing. The helical transmembrane segment at 22–42 (VFLARFISIVSLGLLGVAVPV) threads the bilayer. Residues 43-55 (QIQMMTHSTWQVG) lie on the Periplasmic side of the membrane. Residues 56 to 76 (LSVTLTGGAMFIGLMVGGVLA) traverse the membrane as a helical segment. Residues 77–83 (DRYERKK) lie on the Cytoplasmic side of the membrane. Residues 84–104 (VILLARGTCGIGFIGLCVNAL) form a helical membrane-spanning segment. Residues 105 to 109 (LPEPS) are Periplasmic-facing. A helical membrane pass occupies residues 110 to 130 (LLAIYLLGLWDGFFASLGVTA). Residues 131–156 (LLAATPALVGRENLMQAGAITMLTVR) lie on the Cytoplasmic side of the membrane. The chain crosses the membrane as a helical span at residues 157-177 (LGSVISPMLGGILLASGGVAW). Residue N178 is a topological domain, periplasmic. Residues 179-199 (YGLAAAGTFITLLPLLTLPRL) traverse the membrane as a helical segment. At 200 to 218 (PVPPQPRENPFLALLAAFR) the chain is on the cytoplasmic side. A helical transmembrane segment spans residues 219-239 (FLLACPLIGGIALLGGLVTMA). Residues 240 to 256 (SAVRVLYPALAMSWQMS) are Periplasmic-facing. The helical transmembrane segment at 257–277 (AAQIGLLYAAIPLGAAIGALT) threads the bilayer. The Cytoplasmic portion of the chain corresponds to 278 to 287 (SGQLAHSVRP). Residues 288 to 307 (GLIMLVSTVGSFLAVGLFAI) traverse the membrane as a helical segment. The Periplasmic portion of the chain corresponds to 308–313 (MPVWIA). The chain crosses the membrane as a helical span at residues 314 to 336 (GVICLALFGWLSAISSLLQYTLL). Residues 337 to 356 (QTQTPENMLGRMNGLWTAQN) lie on the Cytoplasmic side of the membrane. A helical transmembrane segment spans residues 357–377 (VTGDAIGAALLGGLGAMMTPV). Position 378 (A378) is a topological domain, periplasmic. Residues 379–399 (SASVSGFGLVIIGLLLLLVLG) form a helical membrane-spanning segment. At 400 to 414 (ELRRFRQTSPVSDAG) the chain is on the cytoplasmic side.

This sequence belongs to the major facilitator superfamily. EntS (TC 2.A.1.38) family.

The protein localises to the cell inner membrane. Component of an export pathway for enterobactin. The polypeptide is Enterobactin exporter EntS (Salmonella paratyphi A (strain ATCC 9150 / SARB42)).